A 416-amino-acid polypeptide reads, in one-letter code: Putative gustatory receptor 57a (416 aa).

Over 1–13 (MAVLYFFREPETV) the chain is Cytoplasmic. A helical transmembrane segment spans residues 14 to 34 (FDCAAFICILQFLMGCNGFGI). Residues 35-48 (RRSTFRISWASRIY) are Extracellular-facing. The chain crosses the membrane as a helical span at residues 49–69 (SMSVAIAAFCCLFGSLSVLLA). Topologically, residues 70-83 (EEDIRERLAKADNL) are cytoplasmic. A helical transmembrane segment spans residues 84–104 (VLSISALELLMSTLVFGVTVI). Residues 105–143 (SLQVFARRHLGIYQRLAALDARLMSDFGANLNYRKMLRK) are Extracellular-facing. Residues 144–164 (NIAVLGIVTTIYLMAINSAAV) form a helical membrane-spanning segment. The Cytoplasmic portion of the chain corresponds to 165–171 (QVASGHR). A helical membrane pass occupies residues 172-192 (ALFLLFALCYTIVTGGPHFTG). Topologically, residues 193 to 295 (YVHMTLAEML…NEEENGSCYR (103 aa)) are extracellular. N-linked (GlcNAc...) asparagine glycosylation is present at Asn-290. Residues 296–316 (MLGYLALVMIPPLYKLLIAPF) form a helical membrane-spanning segment. Topologically, residues 317–374 (YCDRTIYEARRCLRLVEKLDDWFPQKSSLRPLVESLMSWRIQAKIQFTSGLDVVLSRK) are cytoplasmic. A helical transmembrane segment spans residues 375–395 (VIGLFTSILVNYLLILIQFAM). The Extracellular segment spans residues 396–416 (TQKMGEQIEQQKIALQEWIGF).

It belongs to the insect chemoreceptor superfamily. Gustatory receptor (GR) family. Gr57a subfamily. In terms of tissue distribution, in larvae, is expressed in neurons of the terminal external chemosensory organ as well as in the dorsal pharyngeal sense organ.

The protein resides in the cell membrane. Its function is as follows. Probable gustatory receptor which mediates acceptance or avoidance behavior, depending on its substrates. This chain is Putative gustatory receptor 57a (Gr57a), found in Drosophila melanogaster (Fruit fly).